Here is a 1392-residue protein sequence, read N- to C-terminus: DNA-directed RNA polymerase subunit beta'' (1392 aa).

Zn(2+)-binding residues include Cys-224, Cys-295, Cys-302, and Cys-305.

It belongs to the RNA polymerase beta' chain family. RpoC2 subfamily. As to quaternary structure, in plastids the minimal PEP RNA polymerase catalytic core is composed of four subunits: alpha, beta, beta', and beta''. When a (nuclear-encoded) sigma factor is associated with the core the holoenzyme is formed, which can initiate transcription. The cofactor is Zn(2+).

It is found in the plastid. Its subcellular location is the chloroplast. The catalysed reaction is RNA(n) + a ribonucleoside 5'-triphosphate = RNA(n+1) + diphosphate. DNA-dependent RNA polymerase catalyzes the transcription of DNA into RNA using the four ribonucleoside triphosphates as substrates. This is DNA-directed RNA polymerase subunit beta'' from Solanum bulbocastanum (Wild potato).